Consider the following 216-residue polypeptide: RNA pyrophosphohydrolase (216 aa).

In terms of domain architecture, Nudix hydrolase spans 6-149 (GFRPNVGIIL…KRDVYQLALT (144 aa)). The Nudix box motif lies at 38–59 (GGIKYGETPMQAMYRELHEETG). Positions 159 to 180 (AQRTDKSRGPRAPRYPRVSNGH) are disordered.

The protein belongs to the Nudix hydrolase family. RppH subfamily. The cofactor is a divalent metal cation.

Accelerates the degradation of transcripts by removing pyrophosphate from the 5'-end of triphosphorylated RNA, leading to a more labile monophosphorylated state that can stimulate subsequent ribonuclease cleavage. This chain is RNA pyrophosphohydrolase, found in Burkholderia thailandensis (strain ATCC 700388 / DSM 13276 / CCUG 48851 / CIP 106301 / E264).